The following is a 180-amino-acid chain: ATP synthase subunit delta (180 aa).

Belongs to the ATPase delta chain family. F-type ATPases have 2 components, F(1) - the catalytic core - and F(0) - the membrane proton channel. F(1) has five subunits: alpha(3), beta(3), gamma(1), delta(1), epsilon(1). F(0) has three main subunits: a(1), b(2) and c(10-14). The alpha and beta chains form an alternating ring which encloses part of the gamma chain. F(1) is attached to F(0) by a central stalk formed by the gamma and epsilon chains, while a peripheral stalk is formed by the delta and b chains.

It localises to the cell inner membrane. Its function is as follows. F(1)F(0) ATP synthase produces ATP from ADP in the presence of a proton or sodium gradient. F-type ATPases consist of two structural domains, F(1) containing the extramembraneous catalytic core and F(0) containing the membrane proton channel, linked together by a central stalk and a peripheral stalk. During catalysis, ATP synthesis in the catalytic domain of F(1) is coupled via a rotary mechanism of the central stalk subunits to proton translocation. This protein is part of the stalk that links CF(0) to CF(1). It either transmits conformational changes from CF(0) to CF(1) or is implicated in proton conduction. The chain is ATP synthase subunit delta from Cupriavidus necator (strain ATCC 17699 / DSM 428 / KCTC 22496 / NCIMB 10442 / H16 / Stanier 337) (Ralstonia eutropha).